The primary structure comprises 232 residues: Succinyl-CoA:3-ketoacid coenzyme A transferase subunit A (232 aa).

24–30 serves as a coordination point for CoA; the sequence is GGFGLCG.

Belongs to the 3-oxoacid CoA-transferase subunit A family. In terms of assembly, heterodimer of a subunit A and a subunit B.

It carries out the reaction a 3-oxo acid + succinyl-CoA = a 3-oxoacyl-CoA + succinate. The sequence is that of Succinyl-CoA:3-ketoacid coenzyme A transferase subunit A (scoA) from Helicobacter pylori (strain ATCC 700392 / 26695) (Campylobacter pylori).